The sequence spans 333 residues: Probable G-protein coupled receptor 174 (333 aa).

The Extracellular segment spans residues 1–27; sequence MPANYTCTRPDGDNTDFRYFIYAVTYT. N-linked (GlcNAc...) asparagine glycosylation occurs at Asn4. A helical membrane pass occupies residues 28-48; the sequence is VILVPGLIGNILALWVFYGYM. Residues 49-53 are Cytoplasmic-facing; the sequence is KETKR. A helical membrane pass occupies residues 54–74; it reads AVIFMINLAIADLLQVLSLPL. The Extracellular portion of the chain corresponds to 75–91; sequence RIFYYLNHDWPFGPGLC. A disulfide bridge links Cys91 with Cys168. Residues 92–112 traverse the membrane as a helical segment; that stretch reads MFCFYLKYVNMYASIYFLVCI. Over 113–134 the chain is Cytoplasmic; sequence SVRRFWFLMYPFRFHDCKQKYD. The chain crosses the membrane as a helical span at residues 135–155; it reads LYISIAGWLIICLACVLFPLL. Over 156-182 the chain is Extracellular; sequence RTSDDTSGNRTKCFVDLPTRNVNLAQS. A glycan (N-linked (GlcNAc...) asparagine) is linked at Asn164. A helical transmembrane segment spans residues 183 to 203; it reads VVMMTIGELIGFVTPLLIVLY. The Cytoplasmic portion of the chain corresponds to 204 to 231; that stretch reads CTWKTVLSLQDKYPMAQDLGEKQKALKM. A helical transmembrane segment spans residues 232-252; that stretch reads ILTCAGVFLICFAPYHFSFPL. Residues 253-269 lie on the Extracellular side of the membrane; that stretch reads DFLVKSNEIKSCLARRV. The chain crosses the membrane as a helical span at residues 270-290; it reads ILIFHSVALCLASLNSCLDPV. Topologically, residues 291 to 333 are cytoplasmic; that stretch reads IYYFSTNEFRRRLSRQDLHDSIQLHAKSFVSNHTASTMTPELC.

Belongs to the G-protein coupled receptor 1 family. Interacts with GNA13. Interacts with CCL21.

Its subcellular location is the cell membrane. G-protein-coupled receptor of lysophosphatidylserine (LysoPS) that plays different roles in immune response. Plays a negative role in regulatory T-cell accumulation and homeostasis. Under inflammatory conditions where LysoPS production increases, contributes to the down-regulation of regulatory T-cell activity to favor effector response. Mediates the suppression of IL-2 production in activated T-lymphocytes leading to inhibition of growth, proliferation and differentiation of T-cells. Mechanistically, acts via G(s)-containing heterotrimeric G proteins to trigger elevated cyclic AMP levels and protein kinase A/PKA activity, which may in turn act to antagonize proximal TCR signaling. Plays an important role in the initial period of sepsis through the regulation of macrophage polarization and pro- and anti-inflammatory cytokine secretions. Upon testosterone treatment, acts as a receptor for CCL21 and subsequently triggers through G(q)-alpha and G(12)/G(13) proteins a calcium flux leading to chemotactic effects on activated B-cells. Signals via GNA13 and PKA to promote CD86 up-regulation by follicular B-cells. This Homo sapiens (Human) protein is Probable G-protein coupled receptor 174 (GPR174).